Consider the following 205-residue polypeptide: Regulatory protein RecX (205 aa).

Belongs to the RecX family.

It is found in the cytoplasm. Functionally, modulates RecA activity. This chain is Regulatory protein RecX, found in Finegoldia magna (strain ATCC 29328 / DSM 20472 / WAL 2508) (Peptostreptococcus magnus).